We begin with the raw amino-acid sequence, 363 residues long: Dihydroorotate dehydrogenase (quinone) (363 aa).

FMN contacts are provided by residues 67 to 71 and threonine 91; that span reads AGLDK. Lysine 71 lines the substrate pocket. 116–120 is a substrate binding site; it reads NRMGF. FMN is bound by residues asparagine 145 and asparagine 178. Asparagine 178 provides a ligand contact to substrate. Serine 181 functions as the Nucleophile in the catalytic mechanism. Asparagine 183 contacts substrate. Positions 219 and 247 each coordinate FMN. 248-249 contacts substrate; that stretch reads NT. Residues glycine 268, glycine 297, and 318 to 319 contribute to the FMN site; that span reads YT.

This sequence belongs to the dihydroorotate dehydrogenase family. Type 2 subfamily. In terms of assembly, monomer. FMN serves as cofactor.

It localises to the cell membrane. The catalysed reaction is (S)-dihydroorotate + a quinone = orotate + a quinol. It functions in the pathway pyrimidine metabolism; UMP biosynthesis via de novo pathway; orotate from (S)-dihydroorotate (quinone route): step 1/1. Functionally, catalyzes the conversion of dihydroorotate to orotate with quinone as electron acceptor. This Myxococcus xanthus (strain DK1622) protein is Dihydroorotate dehydrogenase (quinone).